A 485-amino-acid polypeptide reads, in one-letter code: Metalloprotease AprA (485 aa).

A Zn(2+)-binding site is contributed by His-187. Glu-188 is a catalytic residue. Zn(2+)-binding residues include His-191 and His-197. Residues Arg-268, Gly-270, Thr-272, Asp-300, Gly-302, Gly-303, Asp-305, Thr-342, Glu-344, Gly-349, Gly-351, Asp-353, Asn-358, Leu-360, Asn-362, Gly-366, Gly-367, Ala-368, Gly-369, Asp-371, Gly-375, Gly-376, Gly-377, Gly-378, Asp-380, Gly-384, Gly-385, Thr-386, Gly-387, Asp-389, Asp-398, Asp-405, Asp-415, Asp-461, Thr-463, Asn-465, Ser-467, and Asp-469 each coordinate Ca(2+). 3 Hemolysin-type calcium-binding repeats span residues 347 to 364 (FGGS…ANVL), 365 to 382 (KGGA…ADQL), and 383 to 395 (WGGT…VFGA).

The protein belongs to the peptidase M10B family. Requires Ca(2+) as cofactor. The cofactor is Zn(2+).

Its subcellular location is the secreted. Secreted protease which is important for P.entomophila to counteract the local immune response of Drosophila. Can degrade antimicrobial peptides (AMPs), e.g. Diptericin and Cecropin A. Thus, protects P.entomophila from the Drosophila antimicrobial peptides produced by the gut innate immune response, and promotes bacterial persistence in the Drosophila gut and killing of the host. Is responsible for maturation of pro-Monalysin to the active toxin Monalysin, by cleaving its N-terminus. In Pseudomonas entomophila (strain L48), this protein is Metalloprotease AprA.